The sequence spans 342 residues: Probable allantoicase (342 aa).

It belongs to the allantoicase family.

It catalyses the reaction allantoate + H2O = (S)-ureidoglycolate + urea. It participates in nitrogen metabolism; (S)-allantoin degradation; (S)-ureidoglycolate from allantoate (aminidohydrolase route): step 1/1. Utilization of purines as secondary nitrogen sources, when primary sources are limiting. This is Probable allantoicase from Schizosaccharomyces pombe (strain 972 / ATCC 24843) (Fission yeast).